A 273-amino-acid polypeptide reads, in one-letter code: Octanoyltransferase LipM (273 aa).

A BPL/LPL catalytic domain is found at 32-240 (GEIPPTLRFY…GFSEILNIEL (209 aa)). Catalysis depends on cysteine 142, which acts as the Acyl-thioester intermediate.

This sequence belongs to the octanoyltransferase LipM family. As to quaternary structure, monomer.

The enzyme catalyses octanoyl-[ACP] + L-lysyl-[protein] = N(6)-octanoyl-L-lysyl-[protein] + holo-[ACP] + H(+). It functions in the pathway protein modification; protein lipoylation via endogenous pathway; protein N(6)-(lipoyl)lysine from octanoyl-[acyl-carrier-protein]. Functionally, catalyzes the transfer of endogenously produced octanoic acid from octanoyl-acyl-carrier-protein onto the lipoyl domain of GcvH, an intermediate carrier during protein lipoylation. The sequence is that of Octanoyltransferase LipM from Oceanobacillus iheyensis (strain DSM 14371 / CIP 107618 / JCM 11309 / KCTC 3954 / HTE831).